The sequence spans 332 residues: Glycerol-3-phosphate dehydrogenase [NAD(P)+] 2 (332 aa).

NADPH contacts are provided by Ser17, Trp18, Arg37, and Lys112. Sn-glycerol 3-phosphate is bound by residues Lys112 and Gly140. NADPH is bound at residue Ala144. Residues Lys195, Asp243, Ser253, Arg254, and Asn255 each coordinate sn-glycerol 3-phosphate. Residue Lys195 is the Proton acceptor of the active site. Arg254 is a binding site for NADPH. NADPH-binding residues include Val278 and Glu280.

This sequence belongs to the NAD-dependent glycerol-3-phosphate dehydrogenase family.

It localises to the cytoplasm. The catalysed reaction is sn-glycerol 3-phosphate + NAD(+) = dihydroxyacetone phosphate + NADH + H(+). It catalyses the reaction sn-glycerol 3-phosphate + NADP(+) = dihydroxyacetone phosphate + NADPH + H(+). It functions in the pathway membrane lipid metabolism; glycerophospholipid metabolism. Its function is as follows. Catalyzes the reduction of the glycolytic intermediate dihydroxyacetone phosphate (DHAP) to sn-glycerol 3-phosphate (G3P), the key precursor for phospholipid synthesis. This chain is Glycerol-3-phosphate dehydrogenase [NAD(P)+] 2, found in Mycolicibacterium paratuberculosis (strain ATCC BAA-968 / K-10) (Mycobacterium paratuberculosis).